A 219-amino-acid chain; its full sequence is Large ribosomal subunit protein bL31m (219 aa).

2 stretches are compositionally biased toward basic and acidic residues: residues 169-181 (KKEE…KAAE) and 210-219 (KETRHYGKKK). Disordered stretches follow at residues 169-188 (KKEE…ADPF) and 200-219 (TENM…GKKK).

Belongs to the bacterial ribosomal protein bL31 family. Highly divergent. As to quaternary structure, component of the mitochondrial large ribosomal subunit (mt-LSU). Mature N.crassa 74S mitochondrial ribosomes consist of a small (37S) and a large (54S) subunit. The 37S small subunit contains a 16S ribosomal RNA (16S mt-rRNA) and 32 different proteins. The 54S large subunit contains a 23S rRNA (23S mt-rRNA) and 42 different proteins. bL31m bridges the mt-LSU central protuberance and the mt-SSU head.

The protein localises to the mitochondrion. Component of the mitochondrial ribosome (mitoribosome), a dedicated translation machinery responsible for the synthesis of mitochondrial genome-encoded proteins, including at least some of the essential transmembrane subunits of the mitochondrial respiratory chain. The mitoribosomes are attached to the mitochondrial inner membrane and translation products are cotranslationally integrated into the membrane. The protein is Large ribosomal subunit protein bL31m (mrpl36) of Neurospora crassa (strain ATCC 24698 / 74-OR23-1A / CBS 708.71 / DSM 1257 / FGSC 987).